The chain runs to 361 residues: tRNA-specific 2-thiouridylase MnmA (361 aa).

Residues 8–15 (AMSGGVDS) and methionine 34 each bind ATP. Cysteine 104 functions as the Nucleophile in the catalytic mechanism. Cysteines 104 and 202 form a disulfide. Glycine 128 is an ATP binding site. An interaction with tRNA region spans residues 152 to 154 (KDQ). Residue cysteine 202 is the Cysteine persulfide intermediate of the active site. The interval 307–308 (RY) is interaction with tRNA.

The protein belongs to the MnmA/TRMU family.

It is found in the cytoplasm. It catalyses the reaction S-sulfanyl-L-cysteinyl-[protein] + uridine(34) in tRNA + AH2 + ATP = 2-thiouridine(34) in tRNA + L-cysteinyl-[protein] + A + AMP + diphosphate + H(+). Its function is as follows. Catalyzes the 2-thiolation of uridine at the wobble position (U34) of tRNA, leading to the formation of s(2)U34. In Caldicellulosiruptor saccharolyticus (strain ATCC 43494 / DSM 8903 / Tp8T 6331), this protein is tRNA-specific 2-thiouridylase MnmA.